Consider the following 170-residue polypeptide: RNA polymerase sigma factor TcsR (170 aa).

The tract at residues 122-169 (IKDLTQNEKNILRKIYLHGLRESEISRELNISRQAVNKTHLRALEKLK) is sigma-70 factor domain-4. A DNA-binding region (H-T-H motif) is located at residues 143-162 (ESEISRELNISRQAVNKTHL).

This sequence belongs to the sigma-70 factor family.

Functionally, sigma factors are initiation factors that promote the attachment of RNA polymerase to specific initiation sites and are then released. Transcriptional regulator specifically required to activate expression of the toxin gene locus, composed of tcsL and tcdE/utxA. This Paraclostridium sordellii (strain ATCC 9714 / DSM 2141 / JCM 3814 / LMG 15708 / NCIMB 10717 / 211) (Clostridium sordellii) protein is RNA polymerase sigma factor TcsR.